Here is a 194-residue protein sequence, read N- to C-terminus: Elongation factor P (194 aa).

The protein belongs to the elongation factor P family.

The protein localises to the cytoplasm. Its pathway is protein biosynthesis; polypeptide chain elongation. Involved in peptide bond synthesis. Stimulates efficient translation and peptide-bond synthesis on native or reconstituted 70S ribosomes in vitro. Probably functions indirectly by altering the affinity of the ribosome for aminoacyl-tRNA, thus increasing their reactivity as acceptors for peptidyl transferase. The sequence is that of Elongation factor P from Hydrogenobaculum sp. (strain Y04AAS1).